The chain runs to 219 residues: Glutathione S-transferase F13 (219 aa).

Residues 2–82 (AMKLYGDEMS…YIAEKHRDKG (81 aa)) form the GST N-terminal domain. Glutathione is bound by residues 11–12 (SA), 40–41 (HK), 53–54 (KV), and 66–67 (ES). The GST C-terminal domain occupies 90–217 (DPKEAAIVKL…VSPGLTVAPT (128 aa)).

Belongs to the GST superfamily. Phi family.

The protein resides in the cytoplasm. Its subcellular location is the cytosol. The catalysed reaction is RX + glutathione = an S-substituted glutathione + a halide anion + H(+). Its function is as follows. May be involved in the conjugation of reduced glutathione to a wide number of exogenous and endogenous hydrophobic electrophiles and have a detoxification role against certain herbicides. This chain is Glutathione S-transferase F13 (GSTF13), found in Arabidopsis thaliana (Mouse-ear cress).